The chain runs to 384 residues: Viral protein 1 (384 aa).

The polypeptide is Viral protein 1 (Chaetoceros setoense (Chaetoceros setoense DNA virus)).